The following is a 477-amino-acid chain: Stromelysin-1 (477 aa).

The N-terminal stretch at 1 to 17 (MKNLPILLLLCVAACSA) is a signal peptide. The propeptide at 18-99 (YPLDRSARDE…SRCGVPDVGH (82 aa)) is activation peptide. The Cysteine switch motif lies at 90 to 97 (SRCGVPDV). Residue Cys92 participates in Zn(2+) binding. Asn120 is a glycosylation site (N-linked (GlcNAc...) asparagine). Ca(2+)-binding residues include Asp124 and Asp158. Positions 168 and 170 each coordinate Zn(2+). Asp175, Gly176, Gly178, and Val180 together coordinate Ca(2+). Zn(2+) is bound at residue His183. 3 residues coordinate Ca(2+): Gly190, Asn192, and Asp194. His196 provides a ligand contact to Zn(2+). Residues Asp198, Asp199, and Glu201 each coordinate Ca(2+). His218 contributes to the Zn(2+) binding site. Glu219 is an active-site residue. Zn(2+) contacts are provided by His222 and His228. The tract at residues 260 to 285 (QSLYGPPPASPDSPVEPSEPEPPAPG) is disordered. 4 Hemopexin repeats span residues 287 to 336 (LAMC…WPSL), 337 to 383 (PSGI…GFPP), 385 to 433 (VRKI…FPGI), and 434 to 477 (DSKL…WFNC). Cysteines 290 and 477 form a disulfide. Ca(2+) is bound at residue Asp297. The Ca(2+) site is built by Asp389 and Asp438.

Belongs to the peptidase M10A family. It depends on Ca(2+) as a cofactor. Zn(2+) is required as a cofactor.

The protein resides in the secreted. It is found in the extracellular space. It localises to the extracellular matrix. The enzyme catalyses Preferential cleavage where P1', P2' and P3' are hydrophobic residues.. Functionally, metalloproteinase with a rather broad substrate specificity that can degrade fibronectin, laminin, gelatins of type I, III, IV, and V; collagens III, IV, X, and IX, and cartilage proteoglycans. Activates different molecules including growth factors, plasminogen or other matrix metalloproteinases such as MMP9. Once released into the extracellular matrix (ECM), the inactive pro-enzyme is activated by the plasmin cascade signaling pathway. Also acts intracellularly. For example, in dopaminergic neurons, gets activated by the serine protease HTRA2 upon stress and plays a pivotal role in DA neuronal degeneration by mediating microglial activation and alpha-synuclein/SNCA cleavage. In addition, plays a role in immune response and possesses antiviral activity against various viruses. Mechanistically, translocates from the cytoplasm into the cell nucleus upon virus infection to influence NF-kappa-B activities. The protein is Stromelysin-1 (MMP3) of Equus caballus (Horse).